A 162-amino-acid chain; its full sequence is Cytochrome c-type biogenesis protein CcmE (162 aa).

At Met1–Arg7 the chain is on the cytoplasmic side. Residues Leu8 to Ala28 traverse the membrane as a helical; Signal-anchor for type II membrane protein segment. Topologically, residues Leu29 to Gln162 are periplasmic. Heme is bound by residues His122 and Tyr126. Positions Gln138–Gln162 are disordered.

It belongs to the CcmE/CycJ family.

Its subcellular location is the cell inner membrane. Its function is as follows. Heme chaperone required for the biogenesis of c-type cytochromes. Transiently binds heme delivered by CcmC and transfers the heme to apo-cytochromes in a process facilitated by CcmF and CcmH. The protein is Cytochrome c-type biogenesis protein CcmE of Nitrobacter hamburgensis (strain DSM 10229 / NCIMB 13809 / X14).